The primary structure comprises 151 residues: MKIVIQRVKSASVSIDGKIKEKINQGFLLFVGVEDADSNFDLDYAVRKIAQMRIFSDEADKMNLSVQDIQGEILSISQFTLYAETKKGNRPSFSAAGKPYFAKAMYEKFNDSLAQIVPVKAGVFGADMQVELINDGPVTIILDTKEARKNA.

The Gly-cisPro motif, important for rejection of L-amino acids motif lies at 136–137 (GP).

The protein belongs to the DTD family. As to quaternary structure, homodimer.

The protein localises to the cytoplasm. The catalysed reaction is glycyl-tRNA(Ala) + H2O = tRNA(Ala) + glycine + H(+). It carries out the reaction a D-aminoacyl-tRNA + H2O = a tRNA + a D-alpha-amino acid + H(+). Its function is as follows. An aminoacyl-tRNA editing enzyme that deacylates mischarged D-aminoacyl-tRNAs. Also deacylates mischarged glycyl-tRNA(Ala), protecting cells against glycine mischarging by AlaRS. Acts via tRNA-based rather than protein-based catalysis; rejects L-amino acids rather than detecting D-amino acids in the active site. By recycling D-aminoacyl-tRNA to D-amino acids and free tRNA molecules, this enzyme counteracts the toxicity associated with the formation of D-aminoacyl-tRNA entities in vivo and helps enforce protein L-homochirality. The protein is D-aminoacyl-tRNA deacylase of Lactococcus lactis subsp. cremoris (strain SK11).